Consider the following 318-residue polypeptide: Ferrochelatase (318 aa).

Fe cation is bound by residues histidine 186 and glutamate 264.

It belongs to the ferrochelatase family.

The protein localises to the cytoplasm. The enzyme catalyses heme b + 2 H(+) = protoporphyrin IX + Fe(2+). It participates in porphyrin-containing compound metabolism; protoheme biosynthesis; protoheme from protoporphyrin-IX: step 1/1. In terms of biological role, catalyzes the ferrous insertion into protoporphyrin IX. In Chlamydia felis (strain Fe/C-56) (Chlamydophila felis), this protein is Ferrochelatase.